The following is a 217-amino-acid chain: Small ribosomal subunit protein eS6 (217 aa).

The protein belongs to the eukaryotic ribosomal protein eS6 family.

This is Small ribosomal subunit protein eS6 from Hyperthermus butylicus (strain DSM 5456 / JCM 9403 / PLM1-5).